A 617-amino-acid polypeptide reads, in one-letter code: Protein fem-1 homolog C (617 aa).

Met-1 carries the N-acetylmethionine modification. 7 ANK repeats span residues 2–31 (DLKT…KAEV), 40–70 (NGAT…SIEV), 82–111 (EGAP…SVNN), 115–144 (TNST…DLEV), 148–177 (HGHT…DVNR), 181–210 (KGNT…KMEK), and 213–242 (YGMT…TSKT). 2 TPR repeats span residues 245-279 (INAL…RYSD) and 338-371 (SYYI…QQSN). ANK repeat units lie at residues 481–523 (NNFS…DVNV) and 527–556 (DDNS…HFDA).

This sequence belongs to the fem-1 family. Component of a Cul2-RING (CRL2) E3 ubiquitin-protein ligase complex, also named ECS (Elongin BC-CUL2/5-SOCS-box protein) complex, composed of CUL2, Elongin BC (ELOB and ELOC), RBX1 and substrate-specific adapter FEM1C. As to expression, widely expressed. Expressed at higher level in testis.

It participates in protein modification; protein ubiquitination. Substrate-recognition component of a Cul2-RING (CRL2) E3 ubiquitin-protein ligase complex of the DesCEND (destruction via C-end degrons) pathway, which recognizes a C-degron located at the extreme C terminus of target proteins, leading to their ubiquitination and degradation. The C-degron recognized by the DesCEND pathway is usually a motif of less than ten residues and can be present in full-length proteins, truncated proteins or proteolytically cleaved forms. The CRL2(FEM1C) complex specifically recognizes proteins with an arginine at the C-terminus: recognizes and binds proteins ending with -Lys/Arg-Xaa-Arg and -Lys/Arg-Xaa-Xaa-Arg C-degrons, such as SIL1 or OR51B2, leading to their ubiquitination and degradation. The CRL2(FEM1C) complex mediates ubiquitination and degradation of truncated MSRB1/SEPX1 selenoproteins produced by failed UGA/Sec decoding. Promotes ubiquitination and degradation of SLBP. The chain is Protein fem-1 homolog C from Mus musculus (Mouse).